A 351-amino-acid chain; its full sequence is AA9 family lytic polysaccharide monooxygenase A (351 aa).

His-1 lines the Cu(2+) pocket. A disulfide bond links Cys-52 and Cys-178. An N-linked (GlcNAc...) asparagine glycan is attached at Asn-53. Cu(2+) is bound at residue His-86. N-linked (GlcNAc...) asparagine glycosylation is present at Asn-138. Positions 164 and 173 each coordinate O2. Position 175 (Tyr-175) interacts with Cu(2+). Ser-280 carries GPI-anchor amidated serine lipidation. Positions 281–351 (SAIGTSTASS…RSGTLGRLSF (71 aa)) are cleaved as a propeptide — removed in mature form.

This sequence belongs to the polysaccharide monooxygenase AA9 family. Cu(2+) serves as cofactor.

Its subcellular location is the cell membrane. The enzyme catalyses [(1-&gt;4)-beta-D-glucosyl]n+m + reduced acceptor + O2 = 4-dehydro-beta-D-glucosyl-[(1-&gt;4)-beta-D-glucosyl]n-1 + [(1-&gt;4)-beta-D-glucosyl]m + acceptor + H2O.. In terms of biological role, lytic polysaccharide monooxygenase (LPMO) that depolymerizes crystalline and amorphous polysaccharides via the oxidation of scissile alpha- or beta-(1-4)-glycosidic bonds, yielding C1 or C4 oxidation products. Catalysis by LPMOs requires the reduction of the active-site copper from Cu(II) to Cu(I) by a reducing agent and H(2)O(2) or O(2) as a cosubstrate. Functionally, has broad specificity, cleaving at any position along the beta-glucan backbone of xyloglucan, regardless of substitutions. Shows minor activity on glucomannan. The chain is AA9 family lytic polysaccharide monooxygenase A from Gloeophyllum trabeum (Brown rot fungus).